The following is a 105-amino-acid chain: ATP synthase subunit c (105 aa).

The next 2 membrane-spanning stretches (helical) occupy residues 37–57 (IGAGITMVGGATVGLGQGYIF) and 82–102 (SAISESSSIYSLLIAFILIFV).

It belongs to the ATPase C chain family. As to quaternary structure, F-type ATPases have 2 components, F(1) - the catalytic core - and F(0) - the membrane proton channel. F(1) has five subunits: alpha(3), beta(3), gamma(1), delta(1), epsilon(1). F(0) has three main subunits: a(1), b(2) and c(10-14). The alpha and beta chains form an alternating ring which encloses part of the gamma chain. F(1) is attached to F(0) by a central stalk formed by the gamma and epsilon chains, while a peripheral stalk is formed by the delta and b chains.

Its subcellular location is the cell membrane. Functionally, f(1)F(0) ATP synthase produces ATP from ADP in the presence of a proton or sodium gradient. F-type ATPases consist of two structural domains, F(1) containing the extramembraneous catalytic core and F(0) containing the membrane proton channel, linked together by a central stalk and a peripheral stalk. During catalysis, ATP synthesis in the catalytic domain of F(1) is coupled via a rotary mechanism of the central stalk subunits to proton translocation. In terms of biological role, key component of the F(0) channel; it plays a direct role in translocation across the membrane. A homomeric c-ring of between 10-14 subunits forms the central stalk rotor element with the F(1) delta and epsilon subunits. The polypeptide is ATP synthase subunit c (Mycoplasma pneumoniae (strain ATCC 29342 / M129 / Subtype 1) (Mycoplasmoides pneumoniae)).